The primary structure comprises 187 residues: Adenine phosphoribosyltransferase (187 aa).

This sequence belongs to the purine/pyrimidine phosphoribosyltransferase family. As to quaternary structure, homodimer.

It is found in the cytoplasm. It carries out the reaction AMP + diphosphate = 5-phospho-alpha-D-ribose 1-diphosphate + adenine. Its pathway is purine metabolism; AMP biosynthesis via salvage pathway; AMP from adenine: step 1/1. Catalyzes a salvage reaction resulting in the formation of AMP, that is energically less costly than de novo synthesis. The sequence is that of Adenine phosphoribosyltransferase from Paracoccus denitrificans (strain Pd 1222).